A 1068-amino-acid polypeptide reads, in one-letter code: Integrator complex subunit 3 homolog (1068 aa).

2 disordered regions span residues 916–939 (YPSS…STPS) and 1001–1068 (VGRR…NDSD). Residues Ser1038, Ser1039, Ser1043, and Ser1044 each carry the phosphoserine modification.

Belongs to the Integrator subunit 3 family. Belongs to the multiprotein complex Integrator, at least composed of IntS1, IntS2, IntS3, IntS4, omd/IntS5, IntS6, defl/IntS7, IntS8, IntS9, IntS10, IntS11, IntS12, asun/IntS13, IntS14 and IntS15. The core complex associates with protein phosphatase 2A subunits mts/PP2A and Pp2A-29B, to form the Integrator-PP2A (INTAC) complex.

The protein resides in the nucleus. It localises to the cytoplasm. Its function is as follows. Component of the integrator complex, a multiprotein complex that terminates RNA polymerase II (Pol II) transcription in the promoter-proximal region of genes. The integrator complex provides a quality checkpoint during transcription elongation by driving premature transcription termination of transcripts that are unfavorably configured for transcriptional elongation: the complex terminates transcription by (1) catalyzing dephosphorylation of the C-terminal domain (CTD) of Pol II subunit Polr2A/Rbp1 and Spt5, and (2) degrading the exiting nascent RNA transcript via endonuclease activity. The integrator complex is also involved in the 3'-end processing of the U7 snRNA, and also the spliceosomal snRNAs U1, U2, U4 and U5. This Drosophila sechellia (Fruit fly) protein is Integrator complex subunit 3 homolog (IntS3).